The following is a 177-amino-acid chain: Bifunctional protein PyrR (177 aa).

The PRPP-binding signature appears at 97–109 (IILVDDVLYTGRT).

The protein belongs to the purine/pyrimidine phosphoribosyltransferase family. PyrR subfamily.

The enzyme catalyses UMP + diphosphate = 5-phospho-alpha-D-ribose 1-diphosphate + uracil. Regulates the transcription of the pyrimidine nucleotide (pyr) operon in response to exogenous pyrimidines. Its function is as follows. Also displays a weak uracil phosphoribosyltransferase activity which is not physiologically significant. The polypeptide is Bifunctional protein PyrR (Nitrosococcus oceani (strain ATCC 19707 / BCRC 17464 / JCM 30415 / NCIMB 11848 / C-107)).